The sequence spans 219 residues: Uracil-DNA glycosylase (219 aa).

D61 serves as the catalytic Proton acceptor.

The protein belongs to the uracil-DNA glycosylase (UDG) superfamily. UNG family.

It is found in the cytoplasm. It carries out the reaction Hydrolyzes single-stranded DNA or mismatched double-stranded DNA and polynucleotides, releasing free uracil.. Its function is as follows. Excises uracil residues from the DNA which can arise as a result of misincorporation of dUMP residues by DNA polymerase or due to deamination of cytosine. The sequence is that of Uracil-DNA glycosylase from Neisseria gonorrhoeae (strain ATCC 700825 / FA 1090).